We begin with the raw amino-acid sequence, 528 residues long: Na(+)/H(+) antiporter NhaB (528 aa).

Residues 1 to 23 (MPISLGNAFIKNFLGKAPDWYKV) are Cytoplasmic-facing. A helical membrane pass occupies residues 24 to 46 (AIIAFLIINPIVFFLINPFVAGW). The Periplasmic portion of the chain corresponds to 47-95 (LLVAEFIFTLAMALKCYPLQPGGLLAIEAIAIGMTSPAQVKHELVANIE). Residues 96-118 (VLLLLVFMVAGIYFMKHLLLFIF) form a helical membrane-spanning segment. Residues 119-129 (TKILLGIRSKT) lie on the Cytoplasmic side of the membrane. A helical membrane pass occupies residues 130–163 (LLSLAFCFAAAFLSAFLDALTVIAVVISVAIGFY). The Periplasmic segment spans residues 164 to 239 (SIYHKVASGN…ADQAGWLFGE (76 aa)). A helical membrane pass occupies residues 240–262 (FLIRMSPVTLPVFFCGLITCALV). Residues 263–297 (EKLKVFGYGAKLPNNVRQILVDFDNEERKTRTNQD) lie on the Cytoplasmic side of the membrane. A helical transmembrane segment spans residues 298–317 (VAKLWVQGLIAVWLIVALAL). Residues 318–320 (HLA) are Periplasmic-facing. A helical membrane pass occupies residues 321 to 340 (AVGLIGLSVIILATAFTGVI). The Cytoplasmic portion of the chain corresponds to 341-352 (EEHSMGKAFEEA). Residues 353–375 (LPFTALLAVFFSIVAVIIDQELF) form a helical membrane-spanning segment. The Periplasmic portion of the chain corresponds to 376-389 (KPVIDAVLAVEDKG). Residues 390–412 (TQLALFYVANGLLSMVSDNVFVG) form a helical membrane-spanning segment. The Cytoplasmic segment spans residues 413–477 (TVYINEVKTA…PLIRLSYGRM (65 aa)). Residues 478–500 (VIMALPYTIVLAIVGLMGIMFFL) form a helical membrane-spanning segment. The Periplasmic portion of the chain corresponds to 501–528 (EPATASFYDAGWILPHSGDLTPVVSGGH).

It belongs to the NhaB Na(+)/H(+) (TC 2.A.34) antiporter family.

Its subcellular location is the cell inner membrane. It carries out the reaction 2 Na(+)(in) + 3 H(+)(out) = 2 Na(+)(out) + 3 H(+)(in). In terms of biological role, na(+)/H(+) antiporter that extrudes sodium in exchange for external protons. The protein is Na(+)/H(+) antiporter NhaB of Vibrio alginolyticus.